Here is an 863-residue protein sequence, read N- to C-terminus: Leucine-rich repeat and death domain-containing protein 1 (863 aa).

Disordered stretches follow at residues Met1–Ser37 and Ser51–Leu100. Over residues Ser88 to Leu100 the composition is skewed to low complexity. 26 LRR repeats span residues Cys143 to Ile166, Lys167 to Asp189, Leu190 to Leu213, His214 to Leu236, Asn238 to Leu259, Gly260 to Leu282, Tyr284 to Leu305, Pro306 to Leu328, Lys329 to Leu351, Lys353 to Phe374, Arg375 to Cys397, Ala398 to Leu420, Asn422 to Leu443, Asn445 to Cys466, Lys468 to Leu489, Asp490 to Lys513, Leu515 to Leu535, Ile536 to Met558, Ser560 to Leu581, Glu582 to Leu604, Arg606 to Leu627, Leu630 to Met653, Thr654 to Leu676, Asn678 to Leu699, Asn700 to Leu722, and Ser724 to Gly745. One can recognise a Death domain in the interval Glu767–Asn855. An LRR 27 repeat occupies Leu856–Phe863.

This chain is Leucine-rich repeat and death domain-containing protein 1 (LRRD1), found in Macaca fascicularis (Crab-eating macaque).